Here is an 850-residue protein sequence, read N- to C-terminus: Transcription initiation factor TFIID subunit 4B (850 aa).

Residues 99 to 240 (GTTTIQLPAN…TPSNDARLKA (142 aa)) are sufficient for interaction with ZNF628. The region spanning 256–353 (ENVKKCKNFL…VKEVSGDVVI (98 aa)) is the TAFH domain. Residues 504-526 (PSTLLPQAAGIPQTAKVKQLVVQ) form a required for interaction with P65/RELA region. Positions 509–549 (PQAAGIPQTAKVKQLVVQQPSGSSVNHVTSISHSSPLSTQN) match the Nuclear export signal motif. Ser-584 bears the Phosphoserine mark. The 50-residue stretch at 642-691 (PFLVIGALQKRILDIGKKHDITELNSDAVNLISHATQERLRGLLEKLTTI) folds into the Histone-fold domain. The disordered stretch occupies residues 788–812 (KRPLESGNESFKDNPSTSGTSSLTA). The span at 794-812 (GNESFKDNPSTSGTSSLTA) shows a compositional bias: polar residues. Residues 818 to 850 (PRITRICLRDLIFCMEQEREMKYSRALYLALLK) are required for interaction with TAF12.

It belongs to the TAF4 family. TFIID is composed of TATA binding protein (TBP) and a number of TBP-associated factors (TAFs). Heterodimerizes with TAF12/TFII20 via the C-terminal H2A-like histone-fold domain. This heterodimer forms a histone-like octamer with the TAF6/TAFII70-TAF9/TAFII31 heterodimer. Interacts with P65/RELA homodimers and P65/RELA-REL heterodimers. Interaction with POU2AF1, via its C-terminal activation domain, is required for octamer-dependent transcription. Interacts with ZNF628. Highly expressed in the testes and ovary, whereas lower levels are detected in most other tissues.

The protein localises to the nucleus. The protein resides in the cytoplasm. Cell type-specific subunit of the general transcription factor TFIID that may function as a gene-selective coactivator in certain cells. TFIID is a multimeric protein complex that plays a central role in mediating promoter responses to various activators asond repressors. TAF4B is a transcriptional coactivator of the p65/RELA NF-kappa-B subunit. Involved in the activation of a subset of antiapoptotic genes including TNFAIP3. Through interaction with OCBA/POU2AF1, acts as a coactivator of B-cell-specific transcription. Plays a role in spermiogenesis and oogenesis. In Mus musculus (Mouse), this protein is Transcription initiation factor TFIID subunit 4B (Taf4b).